Reading from the N-terminus, the 660-residue chain is UvrABC system protein B (660 aa).

In terms of domain architecture, Helicase ATP-binding spans D26–K196. Residue G39 to T46 coordinates ATP. A Beta-hairpin motif is present at residues Y92–N115. The region spanning Q431–I593 is the Helicase C-terminal domain. The region spanning K622–E657 is the UVR domain.

It belongs to the UvrB family. As to quaternary structure, forms a heterotetramer with UvrA during the search for lesions. Interacts with UvrC in an incision complex.

It is found in the cytoplasm. Functionally, the UvrABC repair system catalyzes the recognition and processing of DNA lesions. A damage recognition complex composed of 2 UvrA and 2 UvrB subunits scans DNA for abnormalities. Upon binding of the UvrA(2)B(2) complex to a putative damaged site, the DNA wraps around one UvrB monomer. DNA wrap is dependent on ATP binding by UvrB and probably causes local melting of the DNA helix, facilitating insertion of UvrB beta-hairpin between the DNA strands. Then UvrB probes one DNA strand for the presence of a lesion. If a lesion is found the UvrA subunits dissociate and the UvrB-DNA preincision complex is formed. This complex is subsequently bound by UvrC and the second UvrB is released. If no lesion is found, the DNA wraps around the other UvrB subunit that will check the other stand for damage. This is UvrABC system protein B from Metamycoplasma arthritidis (strain 158L3-1) (Mycoplasma arthritidis).